A 292-amino-acid polypeptide reads, in one-letter code: Porphobilinogen deaminase (292 aa).

At Cys235 the chain carries S-(dipyrrolylmethanemethyl)cysteine.

Belongs to the HMBS family. In terms of assembly, monomer. It depends on dipyrromethane as a cofactor.

It catalyses the reaction 4 porphobilinogen + H2O = hydroxymethylbilane + 4 NH4(+). It participates in porphyrin-containing compound metabolism; protoporphyrin-IX biosynthesis; coproporphyrinogen-III from 5-aminolevulinate: step 2/4. In terms of biological role, tetrapolymerization of the monopyrrole PBG into the hydroxymethylbilane pre-uroporphyrinogen in several discrete steps. In Acetivibrio thermocellus (strain ATCC 27405 / DSM 1237 / JCM 9322 / NBRC 103400 / NCIMB 10682 / NRRL B-4536 / VPI 7372) (Clostridium thermocellum), this protein is Porphobilinogen deaminase.